The sequence spans 213 residues: MRSGVIAQKVGMTRVYNDAGEHVPVTVLRLDNCQVLAQRTVDKHGYTAVQLGAGQAKVKNTSKAMRGNFAAANVEPKAKLVEFRVSEDNLMDVGSELKAGHFEAGQLVDVTGTTIGKGFAGAMKRHNFGGLRATHGVSVSHRSHGSTGSNQDPGKVWKGKRMAGHMGQTRVTTQNLEVVSTDEDRGLILVKGAVPGSKGSWIIVRDAVKSAAK.

Position 151 is an N5-methylglutamine (glutamine 151).

The protein belongs to the universal ribosomal protein uL3 family. Part of the 50S ribosomal subunit. Forms a cluster with proteins L14 and L19. In terms of processing, methylated by PrmB.

Functionally, one of the primary rRNA binding proteins, it binds directly near the 3'-end of the 23S rRNA, where it nucleates assembly of the 50S subunit. This is Large ribosomal subunit protein uL3 from Allorhizobium ampelinum (strain ATCC BAA-846 / DSM 112012 / S4) (Agrobacterium vitis (strain S4)).